The primary structure comprises 231 residues: Ribose-5-phosphate isomerase A (231 aa).

Substrate contacts are provided by residues 32-35 (TGST), 85-88 (DGAD), and 98-101 (KGGG). E107 (proton acceptor) is an active-site residue. A substrate-binding site is contributed by K125.

It belongs to the ribose 5-phosphate isomerase family. Homodimer.

It carries out the reaction aldehydo-D-ribose 5-phosphate = D-ribulose 5-phosphate. It participates in carbohydrate degradation; pentose phosphate pathway; D-ribose 5-phosphate from D-ribulose 5-phosphate (non-oxidative stage): step 1/1. Functionally, catalyzes the reversible conversion of ribose-5-phosphate to ribulose 5-phosphate. The polypeptide is Ribose-5-phosphate isomerase A (Paraburkholderia xenovorans (strain LB400)).